The primary structure comprises 87 residues: Large ribosomal subunit protein bL31B (87 aa).

This sequence belongs to the bacterial ribosomal protein bL31 family. Type B subfamily. In terms of assembly, part of the 50S ribosomal subunit.

The polypeptide is Large ribosomal subunit protein bL31B (Halorhodospira halophila (strain DSM 244 / SL1) (Ectothiorhodospira halophila (strain DSM 244 / SL1))).